The primary structure comprises 221 residues: MHFLTIYPNCSSGVVRAQSRTEQKNPLGLDDLGIQNLGQTVSLAPAVEAASMLKMEPLNSTHPGTAASSSPLESRAAGGGSGNGNEYFYILVVMSFYGIFLIGIMLGYMKSKRREKKSSLLLLYKDEERLWGEAMKPLPVVSGLRSVQVPLMLNMLQESVAPALSCTLCSMEGDSVSSESSSPDVHLTIQEEGADDELEETSETPLNESSEGSSENIHQNS.

Residues Met-1–Glu-86 lie on the Extracellular side of the membrane. N-linked (GlcNAc...) asparagine glycosylation occurs at Asn-9. Polar residues predominate over residues Leu-58–Leu-72. Positions Leu-58 to Ala-77 are disordered. Residues Tyr-87–Gly-107 form a helical membrane-spanning segment. Topologically, residues Tyr-108–Ser-221 are cytoplasmic. A disordered region spans residues Ser-175 to Ser-221. Residues Glu-192–Ser-202 show a composition bias toward acidic residues. Residues Glu-203–Ser-221 show a composition bias toward polar residues.

The protein belongs to the potassium channel KCNE family. As to quaternary structure, forms heterooligomers with KCNA3, inhibiting its activity by impairing localization to the cell membrane. The stoichiometry of KCNA3 and KCNE4 in the heterooligomers are 4:1, 4:2, 4:3 or 4:4 respectively. Increasing the number of KCNE4 subunits steadily slows the activation KCNA3 and decreases its abundance at the cell membrane. However, a single subunit of KCNE4 is sufficient for the cooperative enhancement of the inactivating function of the channel. However, a single subunit of KCNE4 is sufficient for the cooperative enhancement of the inactivating function of the channel. Interacts with KCNQ1; impairs KCNQ1 localization in lipid rafts and inhibits voltage-gated potassium channel activity. As to expression, predominantly expressed in embryo and adult uterus. Low expression found in kidney, small intestine, lung and heart. Detected in kidney, thymus, and uterus (at protein level).

The protein localises to the membrane. Functionally, ancillary protein that functions as a regulatory subunit of the voltage-gated potassium (Kv) channel complex composed of pore-forming and potassium-conducting alpha subunits and of regulatory beta subunits. KCNE4 beta subunit modulates the gating kinetics and enhances stability of the channel complex. Associates with KCNQ1/KVLTQ1 alpha subunit to inhibit potassium currents. In terms of biological role, may inhibit KCNQ4-mediated potassium currents. The sequence is that of Potassium voltage-gated channel subfamily E member 4 from Homo sapiens (Human).